The primary structure comprises 592 residues: Putative RING finger protein ORF9 (592 aa).

The RING-type zinc finger occupies 12–49 (CCICLEEDIERVDTIPCQHTVCRPCYLKPMINKCPVCR). A coiled-coil region spans residues 414-441 (WELIKREELLQRRYKREEQNLKYTSNRL).

This Ostreid herpesvirus 1 (isolate France) (OsHV-1) protein is Putative RING finger protein ORF9.